Reading from the N-terminus, the 167-residue chain is Transmembrane protein 229B (167 aa).

Residues 1–14 (MASAEPLTALSRWY) are Cytoplasmic-facing. A helical membrane pass occupies residues 15 to 35 (LYAIHGYFCEVMFTAAWEFVV). Topologically, residues 36–40 (NFNWK) are extracellular. A helical membrane pass occupies residues 41 to 61 (FPGVTSVWALFIYGTSILIVE). Topologically, residues 62–73 (RMYLRLRGRCPL) are cytoplasmic. Residues 74–94 (LLRCLIYTLWTYLWEFTTGFI) form a helical membrane-spanning segment. Residues 95–111 (LRQFNACPWDYSQFDFD) lie on the Extracellular side of the membrane. A helical transmembrane segment spans residues 112–132 (FMGLITLEYAVPWFCGALLVE). At 133–167 (QFVIRNTLRLRFDKDAEPGEPSGALALANGHVKTD) the chain is on the cytoplasmic side.

It belongs to the TMEM229 family.

The protein localises to the membrane. This chain is Transmembrane protein 229B (TMEM229B), found in Bos taurus (Bovine).